Here is a 402-residue protein sequence, read N- to C-terminus: Tyrosine--tRNA ligase (402 aa).

Residues 48–57 (PTGSDIHLGH) carry the 'HIGH' region motif. The 'KMSKS' region motif lies at 235–239 (KMSKS). Residue Lys238 coordinates ATP. An S4 RNA-binding domain is found at 338-402 (AKAFYLVSAV…GKKKFVRLVL (65 aa)).

The protein belongs to the class-I aminoacyl-tRNA synthetase family. TyrS type 2 subfamily. As to quaternary structure, homodimer.

It localises to the cytoplasm. It catalyses the reaction tRNA(Tyr) + L-tyrosine + ATP = L-tyrosyl-tRNA(Tyr) + AMP + diphosphate + H(+). Its function is as follows. Catalyzes the attachment of tyrosine to tRNA(Tyr) in a two-step reaction: tyrosine is first activated by ATP to form Tyr-AMP and then transferred to the acceptor end of tRNA(Tyr). The protein is Tyrosine--tRNA ligase of Synechococcus elongatus (strain ATCC 33912 / PCC 7942 / FACHB-805) (Anacystis nidulans R2).